The primary structure comprises 104 residues: Large ribosomal subunit protein uL23 (104 aa).

This sequence belongs to the universal ribosomal protein uL23 family. As to quaternary structure, part of the 50S ribosomal subunit. Contacts protein L29, and trigger factor when it is bound to the ribosome.

In terms of biological role, one of the early assembly proteins it binds 23S rRNA. One of the proteins that surrounds the polypeptide exit tunnel on the outside of the ribosome. Forms the main docking site for trigger factor binding to the ribosome. The chain is Large ribosomal subunit protein uL23 from Ralstonia nicotianae (strain ATCC BAA-1114 / GMI1000) (Ralstonia solanacearum).